Consider the following 518-residue polypeptide: Sensor protein kinase HptS (518 aa).

Helical transmembrane passes span 20 to 40 (IFPV…IYIW) and 222 to 242 (GITL…FGFI). The 217-residue stretch at 297-513 (EQLIHSIEHT…LICYKIPLSR (217 aa)) folds into the Histidine kinase domain. Residue H325 is modified to Phosphohistidine; by autocatalysis.

Autophosphorylated.

It is found in the cell membrane. It carries out the reaction ATP + protein L-histidine = ADP + protein N-phospho-L-histidine.. Its function is as follows. Member of the two-component regulatory system HptS/HptR that regulates genes involved in hexose phosphate transport system in response to changes in extracellular phosphate sources. May act as a sensor protein kinase which is autophosphorylated at a histidine residue and transfers its phosphate group to the conserved aspartic acid residue in the regulatory domain of HptS. In turn, HptS antagonizes CcpA-dependent transcription of a subset of CcpA-regulated genes involved in antibiotic susceptibility. This Staphylococcus aureus (strain MRSA252) protein is Sensor protein kinase HptS (hptS).